The sequence spans 146 residues: Putative transposon Ty5-1 protein YCL075W (146 aa).

The polypeptide is Putative transposon Ty5-1 protein YCL075W (TY5B) (Saccharomyces cerevisiae (strain ATCC 204508 / S288c) (Baker's yeast)).